A 323-amino-acid polypeptide reads, in one-letter code: Thymidylate synthase (323 aa).

DUMP-binding positions include Arg-21 and 172–173 (RR). The active-site Nucleophile is the Cys-192. DUMP is bound by residues 214 to 217 (RSND), Asn-225, and 255 to 257 (HVY). Residue Asp-217 participates in (6R)-5,10-methylene-5,6,7,8-tetrahydrofolate binding. Residue Ala-322 coordinates (6R)-5,10-methylene-5,6,7,8-tetrahydrofolate.

It belongs to the thymidylate synthase family. Bacterial-type ThyA subfamily. Homodimer.

It is found in the cytoplasm. The catalysed reaction is dUMP + (6R)-5,10-methylene-5,6,7,8-tetrahydrofolate = 7,8-dihydrofolate + dTMP. The protein operates within pyrimidine metabolism; dTTP biosynthesis. Its function is as follows. Catalyzes the reductive methylation of 2'-deoxyuridine-5'-monophosphate (dUMP) to 2'-deoxythymidine-5'-monophosphate (dTMP) while utilizing 5,10-methylenetetrahydrofolate (mTHF) as the methyl donor and reductant in the reaction, yielding dihydrofolate (DHF) as a by-product. This enzymatic reaction provides an intracellular de novo source of dTMP, an essential precursor for DNA biosynthesis. This Bordetella parapertussis (strain 12822 / ATCC BAA-587 / NCTC 13253) protein is Thymidylate synthase.